A 510-amino-acid chain; its full sequence is ATP synthase subunit alpha, chloroplastic (510 aa).

Gly170–Thr177 serves as a coordination point for ATP.

Belongs to the ATPase alpha/beta chains family. F-type ATPases have 2 components, CF(1) - the catalytic core - and CF(0) - the membrane proton channel. CF(1) has five subunits: alpha(3), beta(3), gamma(1), delta(1), epsilon(1). CF(0) has four main subunits: a, b, b' and c.

The protein localises to the plastid. Its subcellular location is the chloroplast thylakoid membrane. It catalyses the reaction ATP + H2O + 4 H(+)(in) = ADP + phosphate + 5 H(+)(out). Functionally, produces ATP from ADP in the presence of a proton gradient across the membrane. The alpha chain is a regulatory subunit. The chain is ATP synthase subunit alpha, chloroplastic from Phaseolus vulgaris (Kidney bean).